We begin with the raw amino-acid sequence, 310 residues long: Keratin, type II cytoskeletal 8 (310 aa).

The tract at residues 1–38 is disordered; that stretch reads QRTLKVSSSGPRSFSSRSFSSGPSSRISSSSYSRVGSN. K5 participates in a covalent cross-link: Glycyl lysine isopeptide (Lys-Gly) (interchain with G-Cter in SUMO2). A phosphoserine mark is found at S7, S9, S15, and S16. A compositionally biased stretch (low complexity) spans 7–38; it reads SSSGPRSFSSRSFSSGPSSRISSSSYSRVGSN. At R17 the chain carries Omega-N-methylarginine. S18, S21, and S25 each carry phosphoserine. R26 carries the post-translational modification Omega-N-methylarginine. S28, S31, and S33 each carry phosphoserine. R34 carries the omega-N-methylarginine modification. S37 bears the Phosphoserine mark. R42 bears the Asymmetric dimethylarginine; alternate mark. R42 bears the Omega-N-methylarginine; alternate mark. The coil 1A stretch occupies residues 92-127; that stretch reads EKEQIKTLNNKFASFIDKVRFLEQQNKILETKWSFL. Positions 92–310 constitute an IF rod domain; the sequence is EKEQIKTLNN…LRHTKTEISE (219 aa). At K102 the chain carries N6-malonyllysine. Glycyl lysine isopeptide (Lys-Gly) (interchain with G-Cter in SUMO2) cross-links involve residues K123 and K131. Residues 128–144 form a linker 1 region; it reads QQQKTSQSNLDGLFEKY. The interval 145-236 is coil 1B; it reads ITNLRRQLDS…HLYEEEIKEM (92 aa). Residue K198 forms a Glycyl lysine isopeptide (Lys-Gly) (interchain with G-Cter in SUMO1); alternate linkage. A Glycyl lysine isopeptide (Lys-Gly) (interchain with G-Cter in SUMO2); alternate cross-link involves residue K198. At K208 the chain carries N6-acetyllysine. Phosphotyrosine is present on Y229. The segment at 237–260 is linker 12; the sequence is QSQISDTSVVVSMDNSRSLDLDGI. S254 and S275 each carry phosphoserine. Residues 261-310 are coil 2; sequence IADVRAQYEEIANRSRAEAETMYQIKYEELQLLAGKHGDDLRHTKTEISE. A Glycyl lysine isopeptide (Lys-Gly) (interchain with G-Cter in SUMO2) cross-link involves residue K286. A Glycyl lysine isopeptide (Lys-Gly) (interchain with G-Cter in SUMO2); alternate cross-link involves residue K296. K296 is subject to N6-acetyllysine; alternate. Residue K305 forms a Glycyl lysine isopeptide (Lys-Gly) (interchain with G-Cter in SUMO2) linkage.

The protein belongs to the intermediate filament family. As to quaternary structure, heterotetramer of two type I and two type II keratins. Forms a heterodimer with KRT18. Associates with KRT20. Interacts with PNN. When associated with KRT19, interacts with DMD. Interacts with APEX1. Interacts with GPER1. Interacts with EPPK1. Interacts with PKP1 and PKP2. Post-translationally, O-glycosylated. O-GlcNAcylation at multiple sites increases solubility, and decreases stability by inducing proteasomal degradation. O-glycosylated (O-GlcNAcylated), in a cell cycle-dependent manner.

The protein localises to the cytoplasm. Its subcellular location is the nucleus. It is found in the nucleoplasm. The protein resides in the nucleus matrix. In terms of biological role, together with KRT19, helps to link the contractile apparatus to dystrophin at the costameres of striated muscle. The chain is Keratin, type II cytoskeletal 8 from Potorous tridactylus (Potoroo).